The sequence spans 201 residues: MNPEYDYLFKLLLIGDSGVGKSCLLLRFADDTYTESYISTIGVDFKIRTIELDGKTIKLQIWDTAGQERFRTITSSYYRGAHGIIVVYDVTDQESYANVKQWLQEIDRYASENVNKLLVGNKSDLTTKKVVDNTTAKEFADSLGIPFLETSAKNATNVEQAFMTMAAEIKKRMGPGAASGGERPNLKIDSTPVKPAGGGCC.

Methionine 1 bears the N-acetylmethionine mark. GTP contacts are provided by serine 17, glycine 18, valine 19, glycine 20, lysine 21, serine 22, cysteine 23, tyrosine 33, threonine 34, glutamate 35, serine 36, serine 39, and threonine 40. Mg(2+) is bound at residue serine 22. Residues 30 to 45 (DDTYTESYISTIGVDF) carry the Switch 1 motif. Threonine 40 and aspartate 63 together coordinate Mg(2+). The switch 2 region; required for interaction with REP1/CHM stretch occupies residues 64–83 (TAGQERFRTITSSYYRGAHG). The Switch 2 signature appears at 65-80 (AGQERFRTITSSYYRG). Glycine 66 contacts GTP. (Microbial infection) O-(2-cholinephosphoryl)serine is present on serine 76. Tyrosine 77 bears the (Microbial infection) O-AMP-tyrosine mark. GTP is bound by residues asparagine 121, lysine 122, aspartate 124, serine 151, alanine 152, and lysine 153. The segment at 174–201 (GPGAASGGERPNLKIDSTPVKPAGGGCC) is disordered. S-geranylgeranyl cysteine attachment occurs at residues cysteine 200 and cysteine 201. At cysteine 201 the chain carries Cysteine methyl ester.

It belongs to the small GTPase superfamily. Rab family. Interacts with MICAL1 and MICAL2. Interacts (in GTP-bound form) with MICALCL, MICAL1 and MILCAL3. Interacts with GDI1; the interaction requires the GDP-bound state. Interacts with CHM/REP1; the interaction requires the GDP-bound form and is necessary for prenylation by GGTase II. Interacts with RabGAP TBC1D20. Interacts (in GDP-bound form) with lipid phosphatase MTMR6 (via GRAM domain); the interaction regulates MTMR6 recruitment to the endoplasmic reticulum-Golgi intermediate compartment. Interacts (in GDP-bound form) with lipid phosphatase MTMR7. In terms of assembly, (Microbial infection) Interacts with L.pneumophila AnkX. Interacts with L.pneumophila Lem3. Interacts with L.pneumophila SidD. Interacts with L.pneumophila DrrA. It depends on Mg(2+) as a cofactor. In terms of processing, prenylated; by GGTase II, only after interaction of the substrate with Rab escort protein 1 (REP1). (Microbial infection) AMPylation at Tyr-77 by L.pneumophila DrrA occurs in the switch 2 region and leads to moderate inactivation of the GTPase activity. It appears to prolong the lifetime of the GTP state of RAB1B by restricting access of GTPase effectors to switch 2 and blocking effector-stimulated GTP hydrolysis, thereby rendering RAB1B constitutively active. It is later de-AMPylated by L.pneumophila SidD, releasing RAB1B from bacterial phagosomes. Post-translationally, (Microbial infection) Phosphocholinated at Ser-76 by L.pneumophila AnkX, leading to displace GDP dissociation inhibitors (GDI). Both GDP-bound and GTP-bound forms can be phosphocholinated. Dephosphocholinated by L.pneumophila Lem3, restoring accessibility to L.pneumophila GTPase effector LepB. In terms of processing, (Microbial infection) Glycosylated by S.typhimurium protein Ssek3: arginine GlcNAcylation prevents GTPase activity, thereby disrupting vesicular protein transport from the endoplasmic reticulum (ER) to the Golgi compartment.

It localises to the cytoplasm. The protein resides in the membrane. The protein localises to the preautophagosomal structure membrane. Its subcellular location is the perinuclear region. It catalyses the reaction GTP + H2O = GDP + phosphate + H(+). Its activity is regulated as follows. Regulated by guanine nucleotide exchange factors (GEFs) which promote the exchange of bound GDP for free GTP. Regulated by GTPase activating proteins (GAPs) including TBC1D20 which increases the GTP hydrolysis activity. Inhibited by GDP dissociation inhibitors (GDIs). In terms of biological role, the small GTPases Rab are key regulators of intracellular membrane trafficking, from the formation of transport vesicles to their fusion with membranes. Rabs cycle between an inactive GDP-bound form and an active GTP-bound form that is able to recruit to membranes different set of downstream effectors directly responsible for vesicle formation, movement, tethering and fusion. Plays a role in the initial events of the autophagic vacuole development which take place at specialized regions of the endoplasmic reticulum. Regulates vesicular transport between the endoplasmic reticulum and successive Golgi compartments. Required to modulate the compacted morphology of the Golgi. Promotes the recruitment of lipid phosphatase MTMR6 to the endoplasmic reticulum-Golgi intermediate compartment. The polypeptide is Ras-related protein Rab-1B (Homo sapiens (Human)).